The following is a 504-amino-acid chain: MFGVLQKPHVLVLGLGESGLAMARWCGLNGCRVRVADTREAPANLVFLQAELTTAQFMGGQFTENLLDDIGLVAISPGLSPLEPNTRALLEAAQARSIPVWGEIELFAQAIGYLEATSGYAPRVLAITGTNGKTTTTALTGRLIERAGKTVGVAGNISPSALDKLSACIASATLPDVWVLELSSFQLEYTFSLAPHAATVLNVTQDHLDWHGSMEAYAAAKARIFGPAEKGCLQVLNRQDPLTMNMARRGTTLVTFGTDLPETPGSYGVLREGGMPWLVLAEPDTEADAEQKPRRRKKDDVAADAVVPVRHKRLMPADALHIRGMHNATNAMAALALCRAIDLPLNALLHGLREYRGEPHRVEWVATIDEVEYFDDSKGTNVGATVAALSGLDKHVVLIAGGEGKGQDFSPLVAPVAQYARAVVLIGKDAGALREALGATGKPLIDAGSLEEAVEKSASLAEAGDVVLLSPACASLDMFRNYVHRAQVFRGAVEELALSRGIMP.

129 to 135 (GTNGKTT) is a binding site for ATP.

Belongs to the MurCDEF family.

It is found in the cytoplasm. It catalyses the reaction UDP-N-acetyl-alpha-D-muramoyl-L-alanine + D-glutamate + ATP = UDP-N-acetyl-alpha-D-muramoyl-L-alanyl-D-glutamate + ADP + phosphate + H(+). The protein operates within cell wall biogenesis; peptidoglycan biosynthesis. Cell wall formation. Catalyzes the addition of glutamate to the nucleotide precursor UDP-N-acetylmuramoyl-L-alanine (UMA). The sequence is that of UDP-N-acetylmuramoylalanine--D-glutamate ligase from Cupriavidus metallidurans (strain ATCC 43123 / DSM 2839 / NBRC 102507 / CH34) (Ralstonia metallidurans).